A 331-amino-acid polypeptide reads, in one-letter code: UPF0194 membrane protein YbhG (331 aa).

The signal sequence occupies residues 1 to 19 (MKKPVVIGLAIAAIVAVIA). Positions 107-208 (EEIAQAAAAV…LDLQDTTLIA (102 aa)) form a coiled coil.

Belongs to the UPF0194 family.

Its subcellular location is the periplasm. In Salmonella agona (strain SL483), this protein is UPF0194 membrane protein YbhG.